The primary structure comprises 347 residues: Involucrin (347 aa).

2 disordered regions span residues 1 to 43 (MSQQ…LPAP) and 56 to 347 (PLED…RRSL). The segment covering 27–36 (ADTQQEQVKQ) has biased composition (polar residues). Composition is skewed to low complexity over residues 70-114 (VPEQ…QQES) and 138-161 (DQQQQQESQVQELHVGHHQQQQES). Basic and acidic residues-rich tracts occupy residues 164-173 (QELHVDHHQQ) and 212-221 (QELHVDHHQQ). Composition is skewed to low complexity over residues 222–241 (QQESQVQELHVDHQQQQQES) and 265–285 (DQQQQELQVQEVQQQQQQQQE). Residues 287–341 (QEDHQKAEHLEQEEAQREQQLKGQLEQEKKGVYQHLDQELTKRDEHLEKKGEHCW) show a composition bias toward basic and acidic residues.

It belongs to the involucrin family. Directly or indirectly cross-linked to cornifelin (CNFN). In terms of processing, substrate of transglutaminase. Specific glutamines or lysines are cross-linked to keratins, desmoplakin and to inter involucrin molecules. As to expression, keratinocytes of epidermis and other stratified squamous epithelia.

Its subcellular location is the cytoplasm. Part of the insoluble cornified cell envelope (CE) of stratified squamous epithelia. This Sus scrofa (Pig) protein is Involucrin (IVL).